The primary structure comprises 354 residues: tRNA-specific 2-thiouridylase MnmA (354 aa).

ATP is bound by residues 7–14 (AMSGGVDS) and Met33. Catalysis depends on Cys94, which acts as the Nucleophile. Cys94 and Cys192 are joined by a disulfide. ATP is bound at residue Gly118. The interval 141–143 (KDQ) is interaction with tRNA. Residue Cys192 is the Cysteine persulfide intermediate of the active site. Residues 296-297 (RY) form an interaction with tRNA region.

This sequence belongs to the MnmA/TRMU family.

Its subcellular location is the cytoplasm. It catalyses the reaction S-sulfanyl-L-cysteinyl-[protein] + uridine(34) in tRNA + AH2 + ATP = 2-thiouridine(34) in tRNA + L-cysteinyl-[protein] + A + AMP + diphosphate + H(+). Its function is as follows. Catalyzes the 2-thiolation of uridine at the wobble position (U34) of tRNA, leading to the formation of s(2)U34. In Trichlorobacter lovleyi (strain ATCC BAA-1151 / DSM 17278 / SZ) (Geobacter lovleyi), this protein is tRNA-specific 2-thiouridylase MnmA.